Here is a 445-residue protein sequence, read N- to C-terminus: Glutamyl-tRNA(Gln) amidotransferase subunit D (445 aa).

One can recognise an Asparaginase/glutaminase domain in the interval 93–425; it reads SEIKIISTGG…EKIRSLMISN (333 aa). Catalysis depends on residues T103, T179, D180, and K258.

Belongs to the asparaginase 1 family. GatD subfamily. Heterodimer of GatD and GatE.

The enzyme catalyses L-glutamyl-tRNA(Gln) + L-glutamine + ATP + H2O = L-glutaminyl-tRNA(Gln) + L-glutamate + ADP + phosphate + H(+). Its function is as follows. Allows the formation of correctly charged Gln-tRNA(Gln) through the transamidation of misacylated Glu-tRNA(Gln) in organisms which lack glutaminyl-tRNA synthetase. The reaction takes place in the presence of glutamine and ATP through an activated gamma-phospho-Glu-tRNA(Gln). The GatDE system is specific for glutamate and does not act on aspartate. The sequence is that of Glutamyl-tRNA(Gln) amidotransferase subunit D from Saccharolobus islandicus (strain Y.N.15.51 / Yellowstone #2) (Sulfolobus islandicus).